Consider the following 451-residue polypeptide: Probable M18 family aminopeptidase 1 (451 aa).

3 residues coordinate Zn(2+): His-93, His-168, and His-426.

It belongs to the peptidase M18 family. Zn(2+) serves as cofactor.

The protein is Probable M18 family aminopeptidase 1 (apeA) of Thermotoga maritima (strain ATCC 43589 / DSM 3109 / JCM 10099 / NBRC 100826 / MSB8).